We begin with the raw amino-acid sequence, 153 residues long: Arginine repressor (153 aa).

This sequence belongs to the ArgR family.

Its subcellular location is the cytoplasm. Its pathway is amino-acid biosynthesis; L-arginine biosynthesis [regulation]. Its function is as follows. Regulates arginine biosynthesis genes. The polypeptide is Arginine repressor (Haemophilus ducreyi (strain 35000HP / ATCC 700724)).